Here is a 467-residue protein sequence, read N- to C-terminus: Asparagine--tRNA ligase (467 aa).

It belongs to the class-II aminoacyl-tRNA synthetase family. As to quaternary structure, homodimer.

It is found in the cytoplasm. It carries out the reaction tRNA(Asn) + L-asparagine + ATP = L-asparaginyl-tRNA(Asn) + AMP + diphosphate + H(+). The sequence is that of Asparagine--tRNA ligase from Bacteroides fragilis (strain YCH46).